The chain runs to 342 residues: GTPase Obg (342 aa).

The 159-residue stretch at 1 to 159 folds into the Obg domain; it reads MKFLDLCKVY…RTIWLRLKLI (159 aa). The OBG-type G domain occupies 160-327; that stretch reads ADAGLLGLPN…VLRALWAEID (168 aa). GTP-binding positions include 166 to 173, 191 to 195, 212 to 215, 279 to 282, and 308 to 310; these read GLPNAGKS, FTTLV, DIPG, NKID, and SGV. Positions 173 and 193 each coordinate Mg(2+).

It belongs to the TRAFAC class OBG-HflX-like GTPase superfamily. OBG GTPase family. As to quaternary structure, monomer. Mg(2+) serves as cofactor.

The protein resides in the cytoplasm. Its function is as follows. An essential GTPase which binds GTP, GDP and possibly (p)ppGpp with moderate affinity, with high nucleotide exchange rates and a fairly low GTP hydrolysis rate. Plays a role in control of the cell cycle, stress response, ribosome biogenesis and in those bacteria that undergo differentiation, in morphogenesis control. The chain is GTPase Obg from Cereibacter sphaeroides (strain ATCC 17025 / ATH 2.4.3) (Rhodobacter sphaeroides).